The primary structure comprises 341 residues: GTP-binding protein REM 2 (341 aa).

Over residues 1 to 13 (MHTDLDTDMDADT) the composition is skewed to acidic residues. Disordered regions lie at residues 1–72 (MHTD…SMPV) and 84–106 (VDEL…GSGE). Positions 18–32 (LCSSSSRQASPSGTP) are enriched in polar residues. At Ser27 the chain carries Phosphoserine. The segment covering 43–54 (QKPEKLLAELDR) has biased composition (basic and acidic residues). Positions 94-105 (SSSGSSDSLGSG) are enriched in low complexity. GTP contacts are provided by residues 122 to 129 (GESGVGKS), 230 to 233 (NKSD), and 261 to 262 (AA). The tract at residues 282 to 309 (RGRGHAGGQRPEPSSPDGPAPPTRRESL) is disordered. Residues 294-303 (PSSPDGPAPP) show a composition bias toward pro residues. Ser296 is modified (phosphoserine).

Belongs to the small GTPase superfamily. RGK family. Expressed in brain and kidney.

The protein resides in the cell membrane. Binds GTP saturably and exhibits a low intrinsic rate of GTP hydrolysis. This Rattus norvegicus (Rat) protein is GTP-binding protein REM 2 (Rem2).